The sequence spans 465 residues: MSIQVYNTLTRKKEPFIPLEPNKVKMYVCGPTVYNYIHIGNARPAIVFDTIRRYLQFRGYEVQYVSNFTDVDDKLIRAARELGEDVPTIAERFIEAYFEDITALGCKKADVHPRVTENIDTIIQFIEQLIEKGYAYEVDGDVYYRTRRFSDYGKLSHQSVDELKSGARIEVGEKKEDPLDFALWKAAKEGEIYWDSPWGKGRPGWHIECSAMARKYLGDTIDIHAGGQDLTFPHHENEIAQSEALTGKPFAKYWLHNGYINIDNEKMSKSLGNFILVHDIIKQVDPQVLRFFMLSVHYRHPINYSQPLLESARSGLERLKTAYANLKHRLESSTNLTTNDEQWLAKIEELRNEFIREMDDDFNTANGIAVLFELAKQANVYLMENHTSQQVIQAFLQQFEQLFDVLGLSLQQDELLDEEIEALIQQRIEARKNRDFALADRIRDELKAKNIILEDTPQGTRWRRG.

Cysteine 29 contributes to the Zn(2+) binding site. A 'HIGH' region motif is present at residues 31 to 41 (PTVYNYIHIGN). Zn(2+)-binding residues include cysteine 209, histidine 234, and glutamate 238. Positions 266–270 (KMSKS) match the 'KMSKS' region motif. Residue lysine 269 participates in ATP binding. Residue serine 270 is modified to Phosphoserine.

Belongs to the class-I aminoacyl-tRNA synthetase family. As to quaternary structure, monomer. Zn(2+) serves as cofactor.

It is found in the cytoplasm. It carries out the reaction tRNA(Cys) + L-cysteine + ATP = L-cysteinyl-tRNA(Cys) + AMP + diphosphate. This chain is Cysteine--tRNA ligase, found in Anoxybacillus flavithermus (strain DSM 21510 / WK1).